Reading from the N-terminus, the 30-residue chain is Sillucin (30 aa).

4 disulfides stabilise this stretch: C2–C7, C12–C24, C13–C30, and C14–C21.

It is found in the secreted. In terms of biological role, sillucin is an antimicrobial agent produced by the thermophilic fungus Rhizomucor pusillus in liquid culture; it is effective against Gram-positive bacteria at the level of RNA metabolism. The polypeptide is Sillucin (Rhizomucor pusillus).